Consider the following 793-residue polypeptide: Probable phosphoketolase (793 aa).

The protein belongs to the XFP family. It depends on thiamine diphosphate as a cofactor.

The sequence is that of Probable phosphoketolase from Rhodopirellula baltica (strain DSM 10527 / NCIMB 13988 / SH1).